A 310-amino-acid chain; its full sequence is Cytochrome f (310 aa).

The signal sequence occupies residues 1–23; sequence MRRLIPILLGSLVLSLSILVAPA. Heme-binding residues include Tyr28, Cys48, Cys51, and His52. Residues 277–297 form a helical membrane-spanning segment; it reads IYGLLAFFVAVSLAQILLVLK.

The protein belongs to the cytochrome f family. The 4 large subunits of the cytochrome b6-f complex are cytochrome b6, subunit IV (17 kDa polypeptide, PetD), cytochrome f and the Rieske protein, while the 4 small subunits are PetG, PetL, PetM and PetN. The complex functions as a dimer. Heme is required as a cofactor.

Its subcellular location is the cellular thylakoid membrane. In terms of biological role, component of the cytochrome b6-f complex, which mediates electron transfer between photosystem II (PSII) and photosystem I (PSI), cyclic electron flow around PSI, and state transitions. In Prochlorococcus marinus (strain MIT 9303), this protein is Cytochrome f.